We begin with the raw amino-acid sequence, 341 residues long: UDP-3-O-acylglucosamine N-acyltransferase (341 aa).

H239 functions as the Proton acceptor in the catalytic mechanism.

This sequence belongs to the transferase hexapeptide repeat family. LpxD subfamily. As to quaternary structure, homotrimer.

The catalysed reaction is a UDP-3-O-[(3R)-3-hydroxyacyl]-alpha-D-glucosamine + a (3R)-hydroxyacyl-[ACP] = a UDP-2-N,3-O-bis[(3R)-3-hydroxyacyl]-alpha-D-glucosamine + holo-[ACP] + H(+). It participates in bacterial outer membrane biogenesis; LPS lipid A biosynthesis. Catalyzes the N-acylation of UDP-3-O-acylglucosamine using 3-hydroxyacyl-ACP as the acyl donor. Is involved in the biosynthesis of lipid A, a phosphorylated glycolipid that anchors the lipopolysaccharide to the outer membrane of the cell. This chain is UDP-3-O-acylglucosamine N-acyltransferase, found in Shewanella oneidensis (strain ATCC 700550 / JCM 31522 / CIP 106686 / LMG 19005 / NCIMB 14063 / MR-1).